Here is a 492-residue protein sequence, read N- to C-terminus: Cysteine--tRNA ligase (492 aa).

Cys27 contacts Zn(2+). The 'HIGH' region motif lies at 29 to 39 (VTVYDLCHLGH). Positions 211, 236, and 240 each coordinate Zn(2+). The short motif at 268–272 (KMSKS) is the 'KMSKS' region element. Lys271 is an ATP binding site.

Belongs to the class-I aminoacyl-tRNA synthetase family. Monomer. Zn(2+) serves as cofactor.

The protein resides in the cytoplasm. It carries out the reaction tRNA(Cys) + L-cysteine + ATP = L-cysteinyl-tRNA(Cys) + AMP + diphosphate. This is Cysteine--tRNA ligase from Prochlorococcus marinus (strain MIT 9515).